The following is a 222-amino-acid chain: uncharacterized protein (222 aa).

Positions 1-20 (MRTTSFAKVAALCGLLALSG) are cleaved as a signal peptide. Cysteine 21 carries N-palmitoyl cysteine lipidation. Cysteine 21 carries S-diacylglycerol cysteine lipidation.

Its subcellular location is the cell membrane. This is an uncharacterized protein from Escherichia coli O157:H7.